Reading from the N-terminus, the 74-residue chain is Toxin Td6 (74 aa).

The first 8 residues, 1–8 (IGMIVECE), serve as a signal peptide directing secretion. An LCN-type CS-alpha/beta domain is found at 9–71 (KEGYLMEANG…IWDSATNTCG (63 aa)). 4 disulfide bridges follow: C19/C70, C23/C45, C31/C51, and C35/C53. An Arginine amide modification is found at R72.

This sequence belongs to the long (4 C-C) scorpion toxin superfamily. Sodium channel inhibitor family. Beta subfamily. In terms of tissue distribution, expressed by the venom gland.

It localises to the secreted. In terms of biological role, beta toxins bind voltage-independently at site-4 of sodium channels (Nav) and shift the voltage of activation toward more negative potentials thereby affecting sodium channel activation and promoting spontaneous and repetitive firing. This chain is Toxin Td6, found in Tityus discrepans (Venezuelan scorpion).